A 405-amino-acid chain; its full sequence is Protein lin-11 (405 aa).

Residues lysine 17 and lysine 18 each participate in a glycyl lysine isopeptide (Lys-Gly) (interchain with G-Cter in SUMO) cross-link. LIM zinc-binding domains lie at 68–124 (CAAC…RRYS) and 127–187 (CAGC…TATK). Polar residues predominate over residues 189-205 (STPTSIHRPVSNGSECN). Disordered stretches follow at residues 189 to 208 (STPTSIHRPVSNGSECNSDV) and 224 to 246 (GEGDCGKDNSDDSNSAKRRGPRT). Residues 241–300 (RRGPRTTIKAKQLETLKNAFAATPKPTRHIREQLAAETGLNMRVIQVWFQNRRSKERRMK) constitute a DNA-binding region (homeobox).

Expressed in ADL, AVJL, AIZL, RICL, RIF and AVG neurons.

It is found in the nucleus. Probable transcription factor which is required for asymmetric division of vulval blast cells. Involved in olfactory plasticity probably by regulating the expression of transcription factor mbr-1 in RIF neurons. Plays a role in the chemorepulsive response toward ascaroside pheromones mediated by the ADL sensory neurons, probably by regulating E-box motif 5'-CANNTG-3' containing target genes in the ADL neurons. Plays a role in the differentiation of the ADL sensory neurons. The sequence is that of Protein lin-11 (lin-11) from Caenorhabditis elegans.